The following is a 132-amino-acid chain: Large ribosomal subunit protein uL14 (132 aa).

The protein belongs to the universal ribosomal protein uL14 family. Part of the 50S ribosomal subunit. Forms a cluster with proteins L3 and L24e, part of which may contact the 16S rRNA in 2 intersubunit bridges.

In terms of biological role, binds to 23S rRNA. Forms part of two intersubunit bridges in the 70S ribosome. This is Large ribosomal subunit protein uL14 from Methanosarcina barkeri (strain Fusaro / DSM 804).